The chain runs to 270 residues: Thymidine kinase 2, mitochondrial (270 aa).

Residues 1 to 38 (MLLRSLRSWAARSPRSVGPGSSGSPGSLDSGAGPLWAP) constitute a mitochondrion transit peptide. The disordered stretch occupies residues 1–54 (MLLRSLRSWAARSPRSVGPGSSGSPGSLDSGAGPLWAPRRAWPPDKDRENDKEK). Low complexity predominate over residues 13 to 34 (SPRSVGPGSSGSPGSLDSGAGP). Residues 42–54 (WPPDKDRENDKEK) are compositionally biased toward basic and acidic residues. 62 to 70 (GNIASGKTT) lines the ATP pocket. Glu-138 functions as the Proton acceptor in the catalytic mechanism.

This sequence belongs to the DCK/DGK family. As to quaternary structure, homodimer. In terms of tissue distribution, found in most tissues; highly expressed in liver.

Its subcellular location is the mitochondrion. The catalysed reaction is thymidine + ATP = dTMP + ADP + H(+). It catalyses the reaction 2'-deoxycytidine + ATP = dCMP + ADP + H(+). The enzyme catalyses 2'-deoxyuridine + ATP = dUMP + ADP + H(+). In terms of biological role, phosphorylates thymidine, deoxycytidine, and deoxyuridine in the mitochondrial matrix. In non-replicating cells, where cytosolic dNTP synthesis is down-regulated, mtDNA synthesis depends solely on TK2 and DGUOK. In Mus musculus (Mouse), this protein is Thymidine kinase 2, mitochondrial (Tk2).